A 172-amino-acid polypeptide reads, in one-letter code: NAD(P)H-quinone oxidoreductase subunit J (172 aa).

It belongs to the complex I 30 kDa subunit family. NDH-1 can be composed of about 15 different subunits; different subcomplexes with different compositions have been identified which probably have different functions.

It is found in the cellular thylakoid membrane. It carries out the reaction a plastoquinone + NADH + (n+1) H(+)(in) = a plastoquinol + NAD(+) + n H(+)(out). The enzyme catalyses a plastoquinone + NADPH + (n+1) H(+)(in) = a plastoquinol + NADP(+) + n H(+)(out). In terms of biological role, NDH-1 shuttles electrons from an unknown electron donor, via FMN and iron-sulfur (Fe-S) centers, to quinones in the respiratory and/or the photosynthetic chain. The immediate electron acceptor for the enzyme in this species is believed to be plastoquinone. Couples the redox reaction to proton translocation, and thus conserves the redox energy in a proton gradient. Cyanobacterial NDH-1 also plays a role in inorganic carbon-concentration. This Synechococcus sp. (strain ATCC 27144 / PCC 6301 / SAUG 1402/1) (Anacystis nidulans) protein is NAD(P)H-quinone oxidoreductase subunit J.